Reading from the N-terminus, the 167-residue chain is NADH-quinone oxidoreductase subunit B 2 (167 aa).

Residues C39, C40, C104, and C134 each coordinate [4Fe-4S] cluster.

The protein belongs to the complex I 20 kDa subunit family. As to quaternary structure, NDH-1 is composed of 14 different subunits. Subunits NuoB, C, D, E, F, and G constitute the peripheral sector of the complex. Requires [4Fe-4S] cluster as cofactor.

The protein localises to the cell inner membrane. It carries out the reaction a quinone + NADH + 5 H(+)(in) = a quinol + NAD(+) + 4 H(+)(out). Its function is as follows. NDH-1 shuttles electrons from NADH, via FMN and iron-sulfur (Fe-S) centers, to quinones in the respiratory chain. Couples the redox reaction to proton translocation (for every two electrons transferred, four hydrogen ions are translocated across the cytoplasmic membrane), and thus conserves the redox energy in a proton gradient. In Burkholderia mallei (strain NCTC 10247), this protein is NADH-quinone oxidoreductase subunit B 2.